Consider the following 4363-residue polypeptide: AM-toxin synthetase AMT1 (4363 aa).

The segment at 278-670 is adenylation 1; it reads AGQAKQRPHA…GSLLYVGRKD (393 aa). One can recognise a Carrier 1 domain in the interval 810 to 887; the sequence is APDSVIARQL…ALAAIAKVIP (78 aa). At Ser-847 the chain carries O-(pantetheine 4'-phosphoryl)serine. A condensation 1 region spans residues 926–1340; sequence EDVYACTPLQ…TLGQIDVLTS (415 aa). Positions 1368–1765 are adenylation 2; the sequence is KQARTRPGAI…LGRKDTQIKI (398 aa). One can recognise a Carrier 2 domain in the interval 1884–1961; the sequence is PPVTDMEKHV…DQARHVTLLT (78 aa). Position 1922 is an O-(pantetheine 4'-phosphoryl)serine (Ser-1922). The tract at residues 1999 to 2410 is condensation 2; that stretch reads EDVYPCTPLQ…ASPSSSTLVS (412 aa). The adenylation 3 stretch occupies residues 2448-2853; sequence RKKALAAPQA…GRKDNQVKIR (406 aa). The 77-residue stretch at 2977 to 3053 folds into the Carrier 3 domain; that stretch reads LPSTVMEETL…DLAACCTDRR (77 aa). Position 3014 is an O-(pantetheine 4'-phosphoryl)serine (Ser-3014). A condensation 3 region spans residues 3098–3503; the sequence is VEDVYPCTPM…ELVSSIETLN (406 aa). The Carrier 4 domain occupies 3730 to 3806; the sequence is PAVTAMQLAI…SLAVRATENT (77 aa). Ser-3767 is subject to O-(pantetheine 4'-phosphoryl)serine. The interval 3850–4204 is condensation 4; the sequence is QDVLPCTSMQ…GLDEIVEHYA (355 aa).

Belongs to the NRP synthetase family.

Its pathway is mycotoxin biosynthesis. Functionally, nonribosomal peptide synthetase; part of the gene clusters that mediate the biosynthesis of AM-toxins, host-selective toxins (HSTs) causing Alternaria blotch on apple, a worldwide distributed disease. AM-toxins are cyclic depsipeptides containing the 3 residues 2-hydroxy-isovaleric acid (2-HIV), dehydroalanine, L-alanine which are common for all 3 AM-toxins I to III. The fourth precursor is L-alpha-amino-methoxyphenyl-valeric acid (L-Amv) for AM-toxin I, L-alpha-amino-phenyl-valeric acid (L-Apv) for AM-toxin II, and L-alpha-amino-hydroxyphenyl-valeric acid (L-Ahv) for AM-toxin III. AM-toxins have two target sites for affecting susceptible apple cells; they cause invagination of the plasma membrane and electrolyte loss, and chloroplast disorganization. The non-ribosomal peptide synthetase AMT1 contains 4 catalytic modules and is responsible for activation of each residue in AM-toxin. The aldo-keto reductase AMT2 catalyzes the conversion of 2-keto-isovaleric acid (2-KIV) to 2-hydroxy-isovaleric acid (2-HIV), one of the precursor residues incorporated by AMT1 during AM-toxin biosynthesis, by reduction of its ketone to an alcohol. The cytochrome P450 monooxygenase AMT3 and the thioesterase AMT4 are also important for AM-toxin production, but their exact function within the AM-toxin biosynthesis are not known yet. Up to 21 proteins (including AMT1 to AMT4) are predicted to be involved in AM-toxin biosynthesis since their expression ishighly up-regulated in AM-toxin-producing cultures. In Alternaria alternata (Alternaria rot fungus), this protein is AM-toxin synthetase AMT1.